Here is a 164-residue protein sequence, read N- to C-terminus: Siroheme decarboxylase alpha subunit (164 aa).

Belongs to the Ahb/Nir family. Forms a heterodimer composed of AhbA and AhbB.

The enzyme catalyses siroheme + 2 H(+) = 12,18-didecarboxysiroheme + 2 CO2. It participates in porphyrin-containing compound metabolism; protoheme biosynthesis. Involved in siroheme-dependent heme b biosynthesis. Catalyzes the decarboxylation of siroheme into didecarboxysiroheme. The protein is Siroheme decarboxylase alpha subunit of Oleidesulfovibrio alaskensis (strain ATCC BAA-1058 / DSM 17464 / G20) (Desulfovibrio alaskensis).